A 222-amino-acid polypeptide reads, in one-letter code: N-(5'-phosphoribosyl)anthranilate isomerase (222 aa).

This sequence belongs to the TrpF family.

It carries out the reaction N-(5-phospho-beta-D-ribosyl)anthranilate = 1-(2-carboxyphenylamino)-1-deoxy-D-ribulose 5-phosphate. The protein operates within amino-acid biosynthesis; L-tryptophan biosynthesis; L-tryptophan from chorismate: step 3/5. This Xanthomonas euvesicatoria pv. vesicatoria (strain 85-10) (Xanthomonas campestris pv. vesicatoria) protein is N-(5'-phosphoribosyl)anthranilate isomerase.